Consider the following 163-residue polypeptide: Bacterial microcompartment assembly protein PduM (163 aa).

This sequence belongs to the PduM family. As to quaternary structure, interacts with shell protein PduK.

The protein resides in the bacterial microcompartment. It participates in polyol metabolism; 1,2-propanediol degradation. Plays an essential role in assembly and/or stability of the bacterial microcompartment (BMC) dedicated to 1,2-propanediol (1,2-PD) degradation. Overexpression impairs BMC formation. Functionally, the 1,2-PD-specific bacterial microcompartment (BMC) concentrates low levels of 1,2-PD catabolic enzymes, concentrates volatile reaction intermediates thus enhancing pathway flux and keeps the level of toxic, mutagenic propionaldehyde low. The protein is Bacterial microcompartment assembly protein PduM of Salmonella typhimurium (strain LT2 / SGSC1412 / ATCC 700720).